Here is a 697-residue protein sequence, read N- to C-terminus: Portal protein (697 aa).

The interval methionine 633–histidine 697 is disordered. Over residues isoleucine 664–arginine 689 the composition is skewed to basic and acidic residues.

This sequence belongs to the herpesviridae portal protein family. As to quaternary structure, homododecamerizes. Interacts with terminase subunits TRM1 and TRM3.

It localises to the virion. It is found in the host nucleus. Functionally, forms a portal in the viral capsid through which viral DNA is translocated during DNA packaging. Assembles as a dodecamer at a single fivefold axe of the T=16 icosahedric capsid. Binds to the molecular motor that translocates the viral DNA, termed terminase. The protein is Portal protein (UL104) of Homo sapiens (Human).